Here is a 788-residue protein sequence, read N- to C-terminus: Structure-specific endonuclease subunit SLX4 (788 aa).

Disordered stretches follow at residues 59-86 (LQNENLENKNKDTSITKPKRRSKRDNNR), 562-584 (KRQPVDSENEIRDSEDEGEHDNS), and 599-622 (DLVNLGRNPRNENDTSVLQVPSSP). Residues 562 to 573 (KRQPVDSENEIR) show a composition bias toward basic and acidic residues. The span at 612-622 (DTSVLQVPSSP) shows a compositional bias: polar residues.

Belongs to the SLX4 family. In terms of assembly, forms a heterodimer with SLX1. Post-translationally, phosphorylated in response to DNA damage.

It localises to the nucleus. Regulatory subunit of the SLX1-SLX4 structure-specific endonuclease that resolves DNA secondary structures generated during DNA repair and recombination. Has endonuclease activity towards branched DNA substrates, introducing single-strand cuts in duplex DNA close to junctions with ss-DNA. This chain is Structure-specific endonuclease subunit SLX4, found in Debaryomyces hansenii (strain ATCC 36239 / CBS 767 / BCRC 21394 / JCM 1990 / NBRC 0083 / IGC 2968) (Yeast).